The following is an 876-amino-acid chain: Leucine--tRNA ligase (876 aa).

The 'HIGH' region signature appears at 42 to 52 (PYPSGKLHMGH). A 'KMSKS' region motif is present at residues 634 to 638 (KMSKS). ATP is bound at residue K637.

This sequence belongs to the class-I aminoacyl-tRNA synthetase family.

Its subcellular location is the cytoplasm. The enzyme catalyses tRNA(Leu) + L-leucine + ATP = L-leucyl-tRNA(Leu) + AMP + diphosphate. This chain is Leucine--tRNA ligase, found in Neisseria gonorrhoeae (strain ATCC 700825 / FA 1090).